The primary structure comprises 312 residues: tRNA uridine(34) hydroxylase (312 aa).

A Rhodanese domain is found at 124–218; the sequence is SDPEVLLIDT…YLEEVPEQES (95 aa). Cysteine 178 acts as the Cysteine persulfide intermediate in catalysis. Residues 293–312 form a disordered region; sequence AKARNQPHPIGRNYRLPSEA.

This sequence belongs to the TrhO family.

The enzyme catalyses uridine(34) in tRNA + AH2 + O2 = 5-hydroxyuridine(34) in tRNA + A + H2O. Catalyzes oxygen-dependent 5-hydroxyuridine (ho5U) modification at position 34 in tRNAs. This is tRNA uridine(34) hydroxylase from Pseudomonas syringae pv. syringae (strain B728a).